Here is a 91-residue protein sequence, read N- to C-terminus: PqqA binding protein 1 (91 aa).

It belongs to the PqqD family. Monomer. Interacts with PqqE.

It participates in cofactor biosynthesis; pyrroloquinoline quinone biosynthesis. In terms of biological role, functions as a PqqA binding protein and presents PqqA to PqqE, in the pyrroloquinoline quinone (PQQ) biosynthetic pathway. The polypeptide is PqqA binding protein 1 (pqqD1) (Pseudomonas putida (strain ATCC 47054 / DSM 6125 / CFBP 8728 / NCIMB 11950 / KT2440)).